Here is a 118-residue protein sequence, read N- to C-terminus: Na(+)/H(+) antiporter subunit G1 (118 aa).

A run of 3 helical transmembrane segments spans residues 9–29 (VSII…TGLI), 47–67 (LGAM…EGYV), and 69–89 (MQLI…SHLI).

Belongs to the CPA3 antiporters (TC 2.A.63) subunit G family. As to quaternary structure, may form a heterooligomeric complex that consists of seven subunits: mnhA1, mnhB1, mnhC1, mnhD1, mnhE1, mnhF1 and mnhG1.

It localises to the cell membrane. In terms of biological role, mnh complex is a Na(+)/H(+) antiporter involved in Na(+) excretion. This chain is Na(+)/H(+) antiporter subunit G1 (mnhG1), found in Staphylococcus epidermidis (strain ATCC 35984 / DSM 28319 / BCRC 17069 / CCUG 31568 / BM 3577 / RP62A).